Here is a 77-residue protein sequence, read N- to C-terminus: UPF0270 protein Spro_4577 (77 aa).

Belongs to the UPF0270 family.

In Serratia proteamaculans (strain 568), this protein is UPF0270 protein Spro_4577.